The following is a 1099-amino-acid chain: SLIT-ROBO Rho GTPase-activating protein 3 (1099 aa).

The F-BAR domain occupies alanine 19–aspartate 314. Residues histidine 205–arginine 225 are disordered. The stretch at glutamine 352–threonine 392 forms a coiled coil. The tract at residues glutamate 471–proline 493 is disordered. The Rho-GAP domain maps to glycine 506 to phenylalanine 694. The 60-residue stretch at valine 744 to methionine 803 folds into the SH3 domain. Polar residues predominate over residues aspartate 809–serine 820. Residues aspartate 809–phenylalanine 847 are disordered. 5 positions are modified to phosphoserine: serine 817, serine 820, serine 821, serine 837, and serine 858. Disordered stretches follow at residues alanine 861–lysine 911 and proline 926–glycine 950. Positions proline 926 to serine 936 are enriched in basic and acidic residues. Residues methionine 937 to serine 947 show a composition bias toward polar residues. Positions histidine 952–alanine 987 form a coiled coil. The residue at position 954 (serine 954) is a Phosphoserine. The disordered stretch occupies residues leucine 995 to methionine 1099. Low complexity-rich tracts occupy residues arginine 1026–threonine 1038 and valine 1060–serine 1074. Positions proline 1089–methionine 1099 are enriched in polar residues.

As to quaternary structure, homodimer. Forms a heterooligomer with SRGAP1 and SRGAP2 through its F-BAR domain. Interacts with WASF1. Probably interacts with ROBO1. Interacts with FASLG. Highly expressed in adult and fetal brain. Expressed at low levels in kidney. Isoform 3 is expressed in the kidney but is absent in the brain.

Functionally, GTPase-activating protein for RAC1 and perhaps Cdc42, but not for RhoA small GTPase. May attenuate RAC1 signaling in neurons. The sequence is that of SLIT-ROBO Rho GTPase-activating protein 3 (SRGAP3) from Homo sapiens (Human).